Here is a 224-residue protein sequence, read N- to C-terminus: N6-methyladenosine RNA demethylase ALKBH (224 aa).

A Fe2OG dioxygenase domain is found at 93–222 (LAQAAIVNFY…RINLNVRQMR (130 aa)). Fe cation contacts are provided by H111, D113, and H178. R213 contributes to the 2-oxoglutarate binding site.

This sequence belongs to the alkB family. It depends on Fe(2+) as a cofactor.

It carries out the reaction an N(6)-methyladenosine in mRNA + 2-oxoglutarate + O2 = an adenosine in mRNA + formaldehyde + succinate + CO2. Functionally, RNA demethylase that regulates the stability of mRNAs through an m(6)A-dependent manner. M6A is a modification present at internal sites of mRNAs and some non-coding RNAs and plays a role in mRNA stability and processing. Demethylate m6A at position A1935 within the 3'UTR of transcription factor ZAP1 and plays an important role in C.parasitica development and virulence. Target mRNAs are primarily associated with amino-acid biosynthesis, 2-oxocarboxylic acid metabolism, and ABC transporters, as well as alpha-amino acid metabolism, small-molecule biosynthesis, and the sulfite reductase complex (NADPH). The protein is N6-methyladenosine RNA demethylase ALKBH of Cryphonectria parasitica (strain ATCC 38755 / EP155).